The sequence spans 147 residues: uncharacterized protein (147 aa).

Residues 51–72 (VTSSMSVMNDSEECPLINGPSM) are disordered.

This is an uncharacterized protein from Gallid herpesvirus 2 (strain GA) (GaHV-2).